We begin with the raw amino-acid sequence, 232 residues long: Large ribosomal subunit protein uL1 (232 aa).

The protein belongs to the universal ribosomal protein uL1 family. In terms of assembly, part of the 50S ribosomal subunit.

Functionally, binds directly to 23S rRNA. The L1 stalk is quite mobile in the ribosome, and is involved in E site tRNA release. Its function is as follows. Protein L1 is also a translational repressor protein, it controls the translation of the L11 operon by binding to its mRNA. The polypeptide is Large ribosomal subunit protein uL1 (Alkaliphilus metalliredigens (strain QYMF)).